A 319-amino-acid polypeptide reads, in one-letter code: Meiotic drive suppressor wtf16 (319 aa).

Disordered regions lie at residues 1-22 and 35-68; these read MKNN…KTGH and DSEE…RSTD. Helical transmembrane passes span 73–93, 110–130, 153–173, 187–207, 215–235, and 241–261; these read FLIK…LAIC, WTLF…LTYF, VVII…CIKF, CSIS…FWTL, FQVL…MYLF, and ATGY…FFFY.

It belongs to the WTF family. As to quaternary structure, homomer. Interacts with other proteins that exhibit high sequence similarity.

Its subcellular location is the spore membrane. The protein resides in the vacuole membrane. Its function is as follows. Acts as a suppressor component of the dual wtf meiotic drive system, and can suppress but not confer meiotic drive by compatible poisons. Wtf meiotic drive systems promote unequal transmission of alleles from the parental zygote to progeny spores by encoding a poison and an antidote from the same locus; the poison is trans-acting and forms toxic aggregates in all spores within an ascus, wherease the antidote is spore-specific and targets aggregates for degradation by the vacuole. Meiotic drive by wtf systems therefore lead to poisoning of all progeny that do not inherit the dual poison/antidote allele, or express a compatible antidote. The protein is Meiotic drive suppressor wtf16 of Schizosaccharomyces pombe (strain 972 / ATCC 24843) (Fission yeast).